A 161-amino-acid polypeptide reads, in one-letter code: Cyclic pyranopterin monophosphate synthase (161 aa).

Substrate contacts are provided by residues 75–77 and 113–114; these read LCH and ME. Aspartate 128 is an active-site residue.

This sequence belongs to the MoaC family. In terms of assembly, homohexamer; trimer of dimers.

It catalyses the reaction (8S)-3',8-cyclo-7,8-dihydroguanosine 5'-triphosphate = cyclic pyranopterin phosphate + diphosphate. The protein operates within cofactor biosynthesis; molybdopterin biosynthesis. Functionally, catalyzes the conversion of (8S)-3',8-cyclo-7,8-dihydroguanosine 5'-triphosphate to cyclic pyranopterin monophosphate (cPMP). In Thioalkalivibrio sulfidiphilus (strain HL-EbGR7), this protein is Cyclic pyranopterin monophosphate synthase.